Here is a 486-residue protein sequence, read N- to C-terminus: Protein DETOXIFICATION 16 (486 aa).

Helical transmembrane passes span 35–55 (GPLI…VMFV), 68–88 (IATS…ASAL), 117–137 (LASI…VFFG), 142–162 (IATL…AYGL), 179–199 (VVFC…VLVF), 207–227 (GAAL…FCYV), 259–279 (ALMV…SGLL), 288–308 (VLSI…GLSG), 331–351 (RVVI…LILI), 365–385 (VVSY…LDSL), 401–421 (IGAI…GLLL), and 433–453 (WLGI…VTIF).

This sequence belongs to the multi antimicrobial extrusion (MATE) (TC 2.A.66.1) family.

Its subcellular location is the membrane. This Arabidopsis thaliana (Mouse-ear cress) protein is Protein DETOXIFICATION 16.